Reading from the N-terminus, the 438-residue chain is Transcriptional regulator Mb0495 (438 aa).

The span at 1 to 12 (MYSTNRTSQSLS) shows a compositional bias: polar residues. Residues 1 to 22 (MYSTNRTSQSLSRKPGRKHQLR) form a disordered region. The segment at residues 52–73 (VGRDVIAGSTSLSIATVNRQVI) is a DNA-binding region (H-T-H motif).

It belongs to the ROK (NagC/XylR) family.

Positively regulates the expression of PE13 and PPE18. The sequence is that of Transcriptional regulator Mb0495 from Mycobacterium bovis (strain ATCC BAA-935 / AF2122/97).